The following is a 294-amino-acid chain: Bifunctional protein FolD 1 (294 aa).

Residues 165–167 (GRS), Ser190, and Thr231 each bind NADP(+).

The protein belongs to the tetrahydrofolate dehydrogenase/cyclohydrolase family. In terms of assembly, homodimer.

The enzyme catalyses (6R)-5,10-methylene-5,6,7,8-tetrahydrofolate + NADP(+) = (6R)-5,10-methenyltetrahydrofolate + NADPH. The catalysed reaction is (6R)-5,10-methenyltetrahydrofolate + H2O = (6R)-10-formyltetrahydrofolate + H(+). Its pathway is one-carbon metabolism; tetrahydrofolate interconversion. Functionally, catalyzes the oxidation of 5,10-methylenetetrahydrofolate to 5,10-methenyltetrahydrofolate and then the hydrolysis of 5,10-methenyltetrahydrofolate to 10-formyltetrahydrofolate. The sequence is that of Bifunctional protein FolD 1 from Paenarthrobacter aurescens (strain TC1).